The chain runs to 214 residues: ATP-dependent Clp protease proteolytic subunit (214 aa).

S114 functions as the Nucleophile in the catalytic mechanism. H139 is a catalytic residue.

The protein belongs to the peptidase S14 family. In terms of assembly, fourteen ClpP subunits assemble into 2 heptameric rings which stack back to back to give a disk-like structure with a central cavity, resembling the structure of eukaryotic proteasomes.

The protein resides in the cytoplasm. The catalysed reaction is Hydrolysis of proteins to small peptides in the presence of ATP and magnesium. alpha-casein is the usual test substrate. In the absence of ATP, only oligopeptides shorter than five residues are hydrolyzed (such as succinyl-Leu-Tyr-|-NHMec, and Leu-Tyr-Leu-|-Tyr-Trp, in which cleavage of the -Tyr-|-Leu- and -Tyr-|-Trp bonds also occurs).. Its function is as follows. Cleaves peptides in various proteins in a process that requires ATP hydrolysis. Has a chymotrypsin-like activity. Plays a major role in the degradation of misfolded proteins. This is ATP-dependent Clp protease proteolytic subunit from Nitrosomonas eutropha (strain DSM 101675 / C91 / Nm57).